The sequence spans 250 residues: tRNA (guanine-N(1)-)-methyltransferase (250 aa).

S-adenosyl-L-methionine is bound by residues G108 and 127–132; that span reads LGDFVL.

The protein belongs to the RNA methyltransferase TrmD family. As to quaternary structure, homodimer.

It localises to the cytoplasm. The enzyme catalyses guanosine(37) in tRNA + S-adenosyl-L-methionine = N(1)-methylguanosine(37) in tRNA + S-adenosyl-L-homocysteine + H(+). Functionally, specifically methylates guanosine-37 in various tRNAs. The protein is tRNA (guanine-N(1)-)-methyltransferase of Streptococcus agalactiae serotype Ia (strain ATCC 27591 / A909 / CDC SS700).